The primary structure comprises 145 residues: Transcription antitermination protein NusB (145 aa).

This sequence belongs to the NusB family.

Involved in transcription antitermination. Required for transcription of ribosomal RNA (rRNA) genes. Binds specifically to the boxA antiterminator sequence of the ribosomal RNA (rrn) operons. This Burkholderia ambifaria (strain MC40-6) protein is Transcription antitermination protein NusB.